A 905-amino-acid polypeptide reads, in one-letter code: Protein translocase subunit SecA (905 aa).

Residues Q87, 105–109, and D509 contribute to the ATP site; that span reads GEGKT. Zn(2+) is bound by residues C890, C892, C901, and H902.

It belongs to the SecA family. In terms of assembly, monomer and homodimer. Part of the essential Sec protein translocation apparatus which comprises SecA, SecYEG and auxiliary proteins SecDF-YajC and YidC. Requires Zn(2+) as cofactor.

It is found in the cell inner membrane. The protein localises to the cytoplasm. It carries out the reaction ATP + H2O + cellular proteinSide 1 = ADP + phosphate + cellular proteinSide 2.. Functionally, part of the Sec protein translocase complex. Interacts with the SecYEG preprotein conducting channel. Has a central role in coupling the hydrolysis of ATP to the transfer of proteins into and across the cell membrane, serving both as a receptor for the preprotein-SecB complex and as an ATP-driven molecular motor driving the stepwise translocation of polypeptide chains across the membrane. The sequence is that of Protein translocase subunit SecA from Acinetobacter baylyi (strain ATCC 33305 / BD413 / ADP1).